We begin with the raw amino-acid sequence, 363 residues long: RNA polymerase I-specific transcription initiation factor RRN5 (363 aa).

Residues 301–344 (LSRRDAPPVHQDENQENQENQENQEQDNTASEGESEAERDEIDE) form a disordered region. Residues 302-313 (SRRDAPPVHQDE) are compositionally biased toward basic and acidic residues. Residues 317 to 328 (NQENQENQEQDN) show a composition bias toward low complexity. Over residues 333–344 (GESEAERDEIDE) the composition is skewed to acidic residues.

As to quaternary structure, component of the UAF (upstream activation factor) complex which consists of UAF30, RRN5, RRN9, RRN10, and histones H3 and H4.

It is found in the nucleus. Its subcellular location is the nucleolus. In terms of biological role, component of the UAF (upstream activation factor) complex which interacts with the upstream element of the RNA polymerase I promoter and forms a stable preinitiation complex. Together with SPT15/TBP UAF seems to stimulate basal transcription to a fully activated level. The sequence is that of RNA polymerase I-specific transcription initiation factor RRN5 (RRN5) from Saccharomyces cerevisiae (strain ATCC 204508 / S288c) (Baker's yeast).